We begin with the raw amino-acid sequence, 80 residues long: Defensin-like protein 17 (80 aa).

The N-terminal stretch at 1–29 is a signal peptide; the sequence is MAKSATIITFLFAALVLFAAFEAPTMVEA. Gln30 is subject to Pyrrolidone carboxylic acid. 4 disulfide bridges follow: Cys33-Cys80, Cys44-Cys65, Cys50-Cys74, and Cys54-Cys76.

It belongs to the DEFL family.

It is found in the secreted. Confers broad-spectrum resistance to pathogens. The sequence is that of Defensin-like protein 17 (PDF1.2C) from Arabidopsis thaliana (Mouse-ear cress).